The following is a 95-amino-acid chain: Aspartyl/glutamyl-tRNA(Asn/Gln) amidotransferase subunit C (95 aa).

Belongs to the GatC family. As to quaternary structure, heterotrimer of A, B and C subunits.

The catalysed reaction is L-glutamyl-tRNA(Gln) + L-glutamine + ATP + H2O = L-glutaminyl-tRNA(Gln) + L-glutamate + ADP + phosphate + H(+). It catalyses the reaction L-aspartyl-tRNA(Asn) + L-glutamine + ATP + H2O = L-asparaginyl-tRNA(Asn) + L-glutamate + ADP + phosphate + 2 H(+). Allows the formation of correctly charged Asn-tRNA(Asn) or Gln-tRNA(Gln) through the transamidation of misacylated Asp-tRNA(Asn) or Glu-tRNA(Gln) in organisms which lack either or both of asparaginyl-tRNA or glutaminyl-tRNA synthetases. The reaction takes place in the presence of glutamine and ATP through an activated phospho-Asp-tRNA(Asn) or phospho-Glu-tRNA(Gln). The chain is Aspartyl/glutamyl-tRNA(Asn/Gln) amidotransferase subunit C from Chlorobium phaeovibrioides (strain DSM 265 / 1930) (Prosthecochloris vibrioformis (strain DSM 265)).